We begin with the raw amino-acid sequence, 337 residues long: Mannitol dehydrogenase (337 aa).

Positions 27, 49, 80, 83, 86, 94, and 143 each coordinate Zn(2+).

This sequence belongs to the zinc-containing alcohol dehydrogenase family. Zn(2+) is required as a cofactor.

The catalysed reaction is D-mannitol + NAD(+) = D-mannose + NADH + H(+). Functionally, oxidizes mannitol to mannose. Provides the initial step by which translocated mannitol is committed to central metabolism and, by regulating mannitol pool size, is important in regulating salt tolerance at the cellular level. In Petroselinum crispum (Parsley), this protein is Mannitol dehydrogenase (ELI3).